Reading from the N-terminus, the 219-residue chain is Kynurenine formamidase (219 aa).

Tryptophan 28 is a substrate binding site. Zn(2+) contacts are provided by histidine 58, histidine 62, and aspartate 64. The active-site Proton donor/acceptor is histidine 68. 2 residues coordinate Zn(2+): histidine 170 and glutamate 182.

The protein belongs to the Cyclase 1 superfamily. KynB family. In terms of assembly, homodimer. The cofactor is Zn(2+).

It catalyses the reaction N-formyl-L-kynurenine + H2O = L-kynurenine + formate + H(+). Its pathway is amino-acid degradation; L-tryptophan degradation via kynurenine pathway; L-kynurenine from L-tryptophan: step 2/2. Functionally, catalyzes the hydrolysis of N-formyl-L-kynurenine to L-kynurenine, the second step in the kynurenine pathway of tryptophan degradation. This Cupriavidus pinatubonensis (strain JMP 134 / LMG 1197) (Cupriavidus necator (strain JMP 134)) protein is Kynurenine formamidase.